The sequence spans 546 residues: Glucose-6-phosphate isomerase (546 aa).

Residue E353 is the Proton donor of the active site. Catalysis depends on residues H384 and K512.

It belongs to the GPI family.

The protein localises to the cytoplasm. It catalyses the reaction alpha-D-glucose 6-phosphate = beta-D-fructose 6-phosphate. Its pathway is carbohydrate biosynthesis; gluconeogenesis. The protein operates within carbohydrate degradation; glycolysis; D-glyceraldehyde 3-phosphate and glycerone phosphate from D-glucose: step 2/4. Its function is as follows. Catalyzes the reversible isomerization of glucose-6-phosphate to fructose-6-phosphate. The polypeptide is Glucose-6-phosphate isomerase (Methylococcus capsulatus (strain ATCC 33009 / NCIMB 11132 / Bath)).